The chain runs to 449 residues: Ribosomal protein uS12 methylthiotransferase RimO (449 aa).

The MTTase N-terminal domain maps to 7–123; the sequence is QKVSMVSLGC…VAEILAEHHA (117 aa). 6 residues coordinate [4Fe-4S] cluster: cysteine 16, cysteine 52, cysteine 86, cysteine 161, cysteine 165, and cysteine 168. The region spanning 147-377 is the Radical SAM core domain; it reads SSPGWYAYLK…MKTQARVSFR (231 aa). The 69-residue stretch at 380–448 folds into the TRAM domain; sequence RAMVGQTEQV…DYDLVAEMIE (69 aa).

It belongs to the methylthiotransferase family. RimO subfamily. Requires [4Fe-4S] cluster as cofactor.

The protein localises to the cytoplasm. It carries out the reaction L-aspartate(89)-[ribosomal protein uS12]-hydrogen + (sulfur carrier)-SH + AH2 + 2 S-adenosyl-L-methionine = 3-methylsulfanyl-L-aspartate(89)-[ribosomal protein uS12]-hydrogen + (sulfur carrier)-H + 5'-deoxyadenosine + L-methionine + A + S-adenosyl-L-homocysteine + 2 H(+). Functionally, catalyzes the methylthiolation of an aspartic acid residue of ribosomal protein uS12. The protein is Ribosomal protein uS12 methylthiotransferase RimO of Trichlorobacter lovleyi (strain ATCC BAA-1151 / DSM 17278 / SZ) (Geobacter lovleyi).